The chain runs to 655 residues: Probable replication factor A 73 kDa subunit (655 aa).

The segment at 195–217 is disordered; that stretch reads NRAAAPEATRARAVPPPARRTAS. A compositionally biased stretch (low complexity) spans 196-207; that stretch reads RAAAPEATRARA. Positions 236 to 326 form a DNA-binding region, OB; the sequence is FKIHGMVSRK…TLRSDSIIEA (91 aa). The segment at 518–539 adopts a C4-type zinc-finger fold; the sequence is CASEGCQKKLVGENGDYRCEKC.

This sequence belongs to the replication factor A protein 1 family. As to quaternary structure, component of the heterotrimeric canonical replication protein A complex (RPA).

It is found in the nucleus. Its function is as follows. As part of the heterotrimeric replication protein A complex (RPA/RP-A), binds and stabilizes single-stranded DNA intermediates, that form during DNA replication or upon DNA stress. It prevents their reannealing and in parallel, recruits and activates different proteins and complexes involved in DNA metabolism. Thereby, it plays an essential role both in DNA replication and the cellular response to DNA damage. This Caenorhabditis elegans protein is Probable replication factor A 73 kDa subunit.